We begin with the raw amino-acid sequence, 355 residues long: MKLTVNLPNTPYDILIQRGSLAQTGAWVKELWKPQKIAIITDDHVGSLYRETVQSSLEQAGFETIVFEFPEGEASKNLDTVNQAYEFLVKNGMTRSDGIIALGGGVVGDLAGFVASTYMRGIHFLQIPTSLTAQVDSSIGGKTGVNTPFAKNMVGTFCQPDGVLIDPDTLKTLGKRELIEGMGEVVKYGLIDDVELWETLDQLDGSVESILEHADYIIYHSCEVKRKVVVEDELDNGVRLYLNFGHTIGHAIEATAGYGQVMHGEAVAIGMVQISRAAEKKGLMPAGMTAKIIAMCEKFGLPTTHQPWNVDELYASLTHDKKTRGKTIKLVIVPQLGQAAIHQIPMEEMLEFLQV.

NAD(+) is bound by residues 71–76, 105–109, 129–130, K142, K151, and 169–172; these read EGEASK, GVVGD, TS, and TLKT. 3 residues coordinate Zn(2+): E184, H246, and H263.

The protein belongs to the sugar phosphate cyclases superfamily. Dehydroquinate synthase family. Co(2+) serves as cofactor. Requires Zn(2+) as cofactor. The cofactor is NAD(+).

Its subcellular location is the cytoplasm. The enzyme catalyses 7-phospho-2-dehydro-3-deoxy-D-arabino-heptonate = 3-dehydroquinate + phosphate. It participates in metabolic intermediate biosynthesis; chorismate biosynthesis; chorismate from D-erythrose 4-phosphate and phosphoenolpyruvate: step 2/7. Catalyzes the conversion of 3-deoxy-D-arabino-heptulosonate 7-phosphate (DAHP) to dehydroquinate (DHQ). The chain is 3-dehydroquinate synthase from Streptococcus suis (strain 98HAH33).